The following is a 594-amino-acid chain: UvrABC system protein C (594 aa).

One can recognise a GIY-YIG domain in the interval 14 to 91 (DQPGCYLMKD…IKKHDPKYNI (78 aa)). The 36-residue stretch at 196-231 (KEVRSELETKMYEASEKLEFERAKELRDQIAHIDAI) folds into the UVR domain.

It belongs to the UvrC family. In terms of assembly, interacts with UvrB in an incision complex.

It is found in the cytoplasm. Its function is as follows. The UvrABC repair system catalyzes the recognition and processing of DNA lesions. UvrC both incises the 5' and 3' sides of the lesion. The N-terminal half is responsible for the 3' incision and the C-terminal half is responsible for the 5' incision. The chain is UvrABC system protein C from Bacillus cereus (strain AH187).